An 805-amino-acid chain; its full sequence is Leucine--tRNA ligase (805 aa).

Residues 40-51 (PYPSGQGLHVGH) carry the 'HIGH' region motif. Residues 577 to 581 (KMSKS) carry the 'KMSKS' region motif. Lysine 580 serves as a coordination point for ATP.

Belongs to the class-I aminoacyl-tRNA synthetase family.

The protein localises to the cytoplasm. It carries out the reaction tRNA(Leu) + L-leucine + ATP = L-leucyl-tRNA(Leu) + AMP + diphosphate. The sequence is that of Leucine--tRNA ligase from Limosilactobacillus fermentum (strain NBRC 3956 / LMG 18251) (Lactobacillus fermentum).